We begin with the raw amino-acid sequence, 487 residues long: Bifunctional protein GlmU (487 aa).

The tract at residues 1–240 is pyrophosphorylase; it reads MAEVTNCAAI…PEELSGVNDR (240 aa). Residues 12-15, Lys26, Gln83, and 88-89 each bind UDP-N-acetyl-alpha-D-glucosamine; these read LAAG and GT. Asp113 contacts Mg(2+). UDP-N-acetyl-alpha-D-glucosamine is bound by residues Gly150, Glu165, Asn180, and Asn238. Asn238 lines the Mg(2+) pocket. The tract at residues 241-261 is linker; the sequence is VQLAAAGRLLNRRMVEEAMRG. Positions 262 to 487 are N-acetyltransferase; that stretch reads GTTIVDPDTT…DAKANDQTTN (226 aa). Positions 343 and 361 each coordinate UDP-N-acetyl-alpha-D-glucosamine. His373 acts as the Proton acceptor in catalysis. Residues Tyr376 and Asn387 each coordinate UDP-N-acetyl-alpha-D-glucosamine. Residues Ala390, 396–397, Ser415, and Ala433 contribute to the acetyl-CoA site; that span reads NY. The disordered stretch occupies residues 449–487; that stretch reads SGGKQRNIEGWVQKKRPGTPAAEAAGKAQDAKANDQTTN.

This sequence in the N-terminal section; belongs to the N-acetylglucosamine-1-phosphate uridyltransferase family. In the C-terminal section; belongs to the transferase hexapeptide repeat family. As to quaternary structure, homotrimer. Requires Mg(2+) as cofactor.

The protein localises to the cytoplasm. The enzyme catalyses alpha-D-glucosamine 1-phosphate + acetyl-CoA = N-acetyl-alpha-D-glucosamine 1-phosphate + CoA + H(+). The catalysed reaction is N-acetyl-alpha-D-glucosamine 1-phosphate + UTP + H(+) = UDP-N-acetyl-alpha-D-glucosamine + diphosphate. It functions in the pathway nucleotide-sugar biosynthesis; UDP-N-acetyl-alpha-D-glucosamine biosynthesis; N-acetyl-alpha-D-glucosamine 1-phosphate from alpha-D-glucosamine 6-phosphate (route II): step 2/2. It participates in nucleotide-sugar biosynthesis; UDP-N-acetyl-alpha-D-glucosamine biosynthesis; UDP-N-acetyl-alpha-D-glucosamine from N-acetyl-alpha-D-glucosamine 1-phosphate: step 1/1. The protein operates within bacterial outer membrane biogenesis; LPS lipid A biosynthesis. Catalyzes the last two sequential reactions in the de novo biosynthetic pathway for UDP-N-acetylglucosamine (UDP-GlcNAc). The C-terminal domain catalyzes the transfer of acetyl group from acetyl coenzyme A to glucosamine-1-phosphate (GlcN-1-P) to produce N-acetylglucosamine-1-phosphate (GlcNAc-1-P), which is converted into UDP-GlcNAc by the transfer of uridine 5-monophosphate (from uridine 5-triphosphate), a reaction catalyzed by the N-terminal domain. This chain is Bifunctional protein GlmU, found in Corynebacterium aurimucosum (strain ATCC 700975 / DSM 44827 / CIP 107346 / CN-1) (Corynebacterium nigricans).